A 1730-amino-acid polypeptide reads, in one-letter code: Meiosis regulator and mRNA stability factor 1 (1730 aa).

Serine 65 is subject to Phosphoserine. Residues 352 to 489 (IGVFWDIENC…ALLHHANQLI (138 aa)) enclose the NYN domain. The span at 655–668 (MESKSGNRNSDHQQ) shows a compositional bias: basic and acidic residues. Residues 655–722 (MESKSGNRNS…VNSPVEKKKR (68 aa)) form a disordered region. A Phosphotyrosine modification is found at tyrosine 698. In terms of domain architecture, RRM spans 781 to 860 (VDIQVSNVDY…KKILVSLSTG (80 aa)). HTH OST-type domains are found at residues 865-939 (SLSL…SPLG) and 993-1069 (SLKV…HNKP). Phosphoserine occurs at positions 1081 and 1083. HTH OST-type domains lie at 1089–1163 (QLIQ…LTHR), 1165–1241 (QVKR…RKRE), 1249–1324 (RTKQ…TEVE), 1325–1400 (RFKA…INRK), 1401–1475 (SLRS…VKLT), and 1476–1550 (SLYL…LKND). Residues 1667–1714 (VQKGNLSCDSSPSSPAASPAPPGPSSEAPRPLFSKDAVESPAKKQPKN) are disordered. The residue at position 1684 (serine 1684) is a Phosphoserine.

Interacts with LIMK2. In terms of tissue distribution, predominantly present in oocytes and barely detectable in granulosa cells (at protein level).

The protein resides in the peroxisome. Essential regulator of oogenesis required for female meiotic progression to repress transposable elements and preventing their mobilization, which is essential for the germline integrity. Probably acts via some RNA metabolic process, equivalent to the piRNA system in males, which mediates the repression of transposable elements during meiosis by forming complexes composed of RNAs and governs the methylation and subsequent repression of transposons. Also required to protect from DNA double-strand breaks. The chain is Meiosis regulator and mRNA stability factor 1 (Marf1) from Mus musculus (Mouse).